Here is a 316-residue protein sequence, read N- to C-terminus: Ribosomal RNA small subunit methyltransferase H (316 aa).

S-adenosyl-L-methionine is bound by residues 35–37, aspartate 55, phenylalanine 84, aspartate 105, and glutamine 112; that span reads SGH.

It belongs to the methyltransferase superfamily. RsmH family.

The protein resides in the cytoplasm. It catalyses the reaction cytidine(1402) in 16S rRNA + S-adenosyl-L-methionine = N(4)-methylcytidine(1402) in 16S rRNA + S-adenosyl-L-homocysteine + H(+). Specifically methylates the N4 position of cytidine in position 1402 (C1402) of 16S rRNA. The sequence is that of Ribosomal RNA small subunit methyltransferase H from Streptococcus equi subsp. zooepidemicus (strain H70).